The sequence spans 291 residues: Ribosomal large subunit pseudouridine synthase B (291 aa).

Positions 3–75 (EKLQKVLARA…ICRVLAYYKP (73 aa)) constitute an S4 RNA-binding domain. The active-site Nucleophile is Asp-110. Residues 256 to 291 (VEKDRRRMKANQIRRAVKRHSQVSGGRRSGGRNNNG) form a disordered region.

The protein belongs to the pseudouridine synthase RsuA family.

The enzyme catalyses uridine(2605) in 23S rRNA = pseudouridine(2605) in 23S rRNA. Its function is as follows. Responsible for synthesis of pseudouridine from uracil-2605 in 23S ribosomal RNA. The chain is Ribosomal large subunit pseudouridine synthase B (rluB) from Escherichia coli (strain K12).